A 224-amino-acid polypeptide reads, in one-letter code: Ribonuclease T (224 aa).

A compositionally biased stretch (acidic residues) spans 1 to 11 (MSEDLYEDDQD). Residues 1–20 (MSEDLYEDDQDSQVSSGSRH) are disordered. Positions 32–206 (VVVDVETGGF…YDTEKTAELF (175 aa)) constitute an Exonuclease domain. 4 residues coordinate Mg(2+): aspartate 35, glutamate 37, histidine 193, and aspartate 198. Catalysis depends on histidine 193, which acts as the Proton donor/acceptor.

Belongs to the RNase T family. As to quaternary structure, homodimer. It depends on Mg(2+) as a cofactor.

Functionally, trims short 3' overhangs of a variety of RNA species, leaving a one or two nucleotide 3' overhang. Responsible for the end-turnover of tRNA: specifically removes the terminal AMP residue from uncharged tRNA (tRNA-C-C-A). Also appears to be involved in tRNA biosynthesis. This Pseudomonas entomophila (strain L48) protein is Ribonuclease T.